A 159-amino-acid polypeptide reads, in one-letter code: MPSFDVVSELDKHEVTNAVDNAIKELDRRYDLKGKGTFEFKELTVTLTAEADFQLEAMIEILKLALVKRKIDAKCLEIKDAYASGKLMKQEVILREGIDKELAKKIVAHIKEAKLKVQAAIQGEQVRVTGKKRDDLQEAIAALRAYDSGMPLQFNNFRD.

It belongs to the YajQ family.

In terms of biological role, nucleotide-binding protein. This chain is Nucleotide-binding protein Psyr_4087, found in Pseudomonas syringae pv. syringae (strain B728a).